Reading from the N-terminus, the 503-residue chain is MATQSDMEKEQKHQQDEGQGGLNNETALASGDACGTGNQDPAASVTTVSSQASPSGGAALSSSTAGSSAAAATSAAIFITDEASGLPIIAAVLTERHSDRQDCRSPHEVFGCVVPEGGSQAAVGPQKATGHADEHLAQTKSPGNSRRRKQPCRNQAAPAQKPPGRRLFPEPLPPSSPGFRPSSYPCSGASTSSQATQPGPALLSHASEARPATRSRITLVASALRRRASGPGPVIRGCTAQPGPAFPHRATHLDPARLSPESAPGPARRGRASVPGPARRGCDSAPGPARRGRDSAPVSAPRGRDSAPGSARRGRDSAPGPALRVRTARSDAGHRSTSTTPGTGLRSRSTQQRSALLSRRSLSGSADENPSCGTGSERLAFQSRSGSPDPEVPSRASPPVWHAVRMRASSPSPPGRFFLPIPQQWDESSSSSYASNSSSPSRSPGLSPSSPSPEFLGLRSISTPSPESLRYALMPEFYALSPVPPEEQAEIESTAHPATPPEP.

Over residues 1–16 (MATQSDMEKEQKHQQD) the composition is skewed to basic and acidic residues. 3 disordered regions span residues 1-72 (MATQ…AAAA), 97-462 (HSDR…RSIS), and 483-503 (VPPE…PPEP). The span at 41 to 72 (PAASVTTVSSQASPSGGAALSSSTAGSSAAAA) shows a compositional bias: low complexity. The segment covering 97-107 (HSDRQDCRSPH) has biased composition (basic and acidic residues). Positions 184 to 197 (YPCSGASTSSQATQ) are enriched in polar residues. Position 259 is a phosphoserine (S259). The segment covering 345-366 (LRSRSTQQRSALLSRRSLSGSA) has biased composition (low complexity). Residues 401 to 409 (WHAVRMRAS) form a sufficient for interaction with EZH2 region. The segment at 403-423 (AVRMRASSPSPPGRFFLPIPQ) is necessary and sufficient for inhibition of PRC2/EED-EZH1 and PRC2/EED-EZH2 complex activity. The span at 428-453 (SSSSSYASNSSSPSRSPGLSPSSPSP) shows a compositional bias: low complexity.

In terms of assembly, interacts with PRC2/EED-EZH1 complex member EZH1 and with PRC2/EED-EZH2 complex member EZH2; the interaction blocks EZH1/EZH2 methyltransferase activity. Interacts (via C-terminus) with SUZ12 which is a member of the PRC2/EED-EZH1 and PRC2/EED-EZH2 complexes. As to expression, in testis, detected in male germ cells inside the seminiferous tubules, especially in spermatogonia and round spermatids (at protein level). In the ovary, expressed in primordial follicles and oocytes but not the external follicle cells (at protein level).

The protein resides in the nucleus. Its subcellular location is the cytoplasm. In terms of biological role, inhibits PRC2/EED-EZH1 and PRC2/EED-EZH2 complex function by inhibiting EZH1/EZH2 methyltransferase activity, thereby causing down-regulation of histone H3 trimethylation on 'Lys-27' (H3K27me3). Probably inhibits methyltransferase activity by limiting the stimulatory effect of cofactors such as AEBP2 and JARID2. Inhibits H3K27me3 deposition during spermatogenesis and oogenesis. This is EZH inhibitory protein from Homo sapiens (Human).